The chain runs to 458 residues: Chitin deacetylase 2 (458 aa).

A signal peptide spans 1-51 (MIPSTAAAALLTLTAGVALAHPGCGGQEIGRRNVGGPMVYRRDVTDEASAA). N-linked (GlcNAc...) asparagine glycosylation is found at asparagine 87, asparagine 99, and asparagine 125. Residues 158–348 (MTWGLGFDDG…IKSAFSYIVP (191 aa)) form the NodB homology domain. Aspartate 165 acts as the Proton acceptor in catalysis. Residue aspartate 165 coordinates acetate. Aspartate 166 is a binding site for Co(2+). Residue asparagine 169 is glycosylated (N-linked (GlcNAc...) asparagine). Positions 215 and 219 each coordinate Co(2+). An acetate-binding site is contributed by tyrosine 256. Asparagine 271 and asparagine 309 each carry an N-linked (GlcNAc...) asparagine glycan. The active-site Proton donor is histidine 322. N-linked (GlcNAc...) asparagine glycosylation is found at asparagine 326, asparagine 354, asparagine 363, asparagine 378, and asparagine 393. Residues 382 to 430 (STTQKDGSSSTNTSSSGSGSAAGSASATSSSDDSSSSGSASASSSSSNA) are disordered. Residue serine 427 is the site of GPI-anchor amidated serine attachment. Residues 428-458 (SNASSGALGMFDGLSGVGLVLSGVVAGVMLL) constitute a propeptide, removed in mature form. Asparagine 429 carries an N-linked (GlcNAc...) asparagine glycan.

The protein belongs to the polysaccharide deacetylase family. It depends on Co(2+) as a cofactor. Glycosylated.

It is found in the secreted. It localises to the cell wall. Its subcellular location is the cell membrane. The enzyme catalyses [(1-&gt;4)-N-acetyl-beta-D-glucosaminyl](n) + n H2O = chitosan + n acetate. Functionally, hydrolyzes the N-acetamido groups of N-acetyl-D-glucosamine residues in chitin to form chitosan and acetate. Chitosan is required to anchor melanin to the cell wall, for maintenance of cell wall integrity, and for cytokinesis. The chain is Chitin deacetylase 2 from Cryptococcus neoformans var. neoformans serotype D (strain B-3501A) (Filobasidiella neoformans).